A 380-amino-acid polypeptide reads, in one-letter code: Putative 8-amino-7-oxononanoate synthase (380 aa).

Arginine 18 is a substrate binding site. Position 106-107 (106-107) interacts with pyridoxal 5'-phosphate; that stretch reads GY. Histidine 131 contacts substrate. Residues serine 179, 205–208, and 236–239 contribute to the pyridoxal 5'-phosphate site; these read DEAH and TFGK. Lysine 239 bears the N6-(pyridoxal phosphate)lysine mark. Substrate is bound at residue threonine 352.

Belongs to the class-II pyridoxal-phosphate-dependent aminotransferase family. BioF subfamily. In terms of assembly, homodimer. It depends on pyridoxal 5'-phosphate as a cofactor.

The catalysed reaction is 6-carboxyhexanoyl-[ACP] + L-alanine + H(+) = (8S)-8-amino-7-oxononanoate + holo-[ACP] + CO2. It functions in the pathway cofactor biosynthesis; biotin biosynthesis. Its function is as follows. Catalyzes the decarboxylative condensation of pimeloyl-[acyl-carrier protein] and L-alanine to produce 8-amino-7-oxononanoate (AON), [acyl-carrier protein], and carbon dioxide. The sequence is that of Putative 8-amino-7-oxononanoate synthase (bioF) from Neisseria gonorrhoeae (strain ATCC 700825 / FA 1090).